The primary structure comprises 1238 residues: Kinesin-related protein 10 (1238 aa).

The Kinesin motor domain occupies 16-374 (SMIVTVRIRP…LKYAQRAKSI (359 aa)). Residue 116–123 (GASGAGKT) coordinates ATP. Residues 417 to 436 (NNNNSNNNNNNNNNNYFSNS) are compositionally biased toward low complexity. The disordered stretch occupies residues 417 to 503 (NNNNSNNNNN…DGEDSNNRDN (87 aa)). Positions 437–464 (FGSCGNKNQPIKQPTPPTSLFHQQNQKY) are enriched in polar residues. The span at 468–497 (DDDDDDDNDQEENNDEVLINEDDEEVDGED) shows a compositional bias: acidic residues. Residues 527 to 602 (TLKKTQSIQR…NNQWRRKLQS (76 aa)) adopt a coiled-coil conformation. Composition is skewed to low complexity over residues 726–795 (NDIN…NIIN), 918–934 (LLPS…SSPL), and 961–971 (NNNNNNNNIAP). 4 disordered regions span residues 726 to 802 (NDIN…LKPR), 891 to 971 (EIDD…NIAP), 1134 to 1156 (TPTS…TTST), and 1191 to 1238 (ATLT…KIIK). The span at 1191-1203 (ATLTPNRNNSQIV) shows a compositional bias: polar residues. Residues 1215–1228 (PTSSSSRLLPSSRT) show a composition bias toward low complexity. The span at 1229–1238 (TVNTSRKIIK) shows a compositional bias: polar residues.

This sequence belongs to the TRAFAC class myosin-kinesin ATPase superfamily. Kinesin family.

Its subcellular location is the cytoplasm. The protein localises to the cytoskeleton. Functionally, microtubule-associated force-producing protein that plays a role in organelle transport. Its motor activity is directed toward the microtubule's plus end. Cooperates with kif8 and dynein to organize interphase microtubules. This chain is Kinesin-related protein 10 (kif10), found in Dictyostelium discoideum (Social amoeba).